Here is a 637-residue protein sequence, read N- to C-terminus: Early transcription factor 70 kDa subunit (637 aa).

Residues 32–185 form the Helicase ATP-binding domain; sequence RTIIDENRSV…GHIIDLMSEE (154 aa). Residue 45-52 coordinates ATP; that stretch reads HIMGSGKT. The DEXH box motif lies at 135–138; it reads DEAH. The 181-residue stretch at 327-507 folds into the Helicase C-terminal domain; it reads KFKYFINRIQ…VLPFDIKKLL (181 aa).

Belongs to the helicase family. VETF subfamily. Heterodimer of a 70 kDa and a 82 kDa subunit. Part of the early transcription complex composed of ETF, RAP94/OPG109, and the DNA-directed RNA polymerase.

It is found in the virion. In terms of biological role, acts with RNA polymerase to initiate transcription from early gene promoters. Is recruited by the RPO-associated protein of 94 kDa RAP94/OPG109 to form the early transcription complex, which also contains the core RNA polymerase. ETF heterodimer binds to early gene promoters. This chain is Early transcription factor 70 kDa subunit (OPG118), found in Homo sapiens (Human).